We begin with the raw amino-acid sequence, 370 residues long: ADP-ribosylhydrolase ARH3 (370 aa).

Glu47 contributes to the Mg(2+) binding site. The residue at position 70 (Thr70) is a Phosphothreonine. The Mg(2+) site is built by Thr82, Asp83, and Asp84. Asp83 is a substrate binding site. Substrate-binding positions include 152–158 (KGSYGNG), His188, Leu241, and Ile277. The Mg(2+) site is built by Asp320, Asp322, and Thr323.

This sequence belongs to the ADP-ribosylglycohydrolase family. As to quaternary structure, monomer. Mg(2+) serves as cofactor. As to expression, ubiquitous.

Its subcellular location is the nucleus. It is found in the cytoplasm. It localises to the chromosome. The protein resides in the mitochondrion matrix. The catalysed reaction is [(1''-&gt;2')-ADP-alpha-D-ribose](n) + H2O = [(1''-&gt;2')-ADP-alpha-D-ribose](n-1) + ADP-D-ribose. It catalyses the reaction 1''-O-acetyl-ADP-alpha-D-ribose + H2O = ADP-D-ribose + acetate + H(+). It carries out the reaction O-(ADP-D-ribosyl)-L-seryl-[protein] + H2O = ADP-D-ribose + L-seryl-[protein]. The enzyme catalyses alpha-NAD(+) + H2O = ADP-D-ribose + nicotinamide + H(+). Its activity is regulated as follows. The protein undergoes a dramatic conformational switch from closed to open states upon substrate-binding, which enables specific substrate recognition for the 1''-O-linkage. The glutamate flap (Glu-47) blocks substrate entrance to Mg(2+) in the unliganded closed state. In presence of substrate, Glu-47 is ejected from the active site: this closed-to-open transition significantly widens the substrate-binding channel and precisely positions the scissile 1''-O-linkage for cleavage while securing tightly 2'- and 3'-hydroxyls of ADP-ribose. In terms of biological role, ADP-ribosylhydrolase that preferentially hydrolyzes the scissile alpha-O-linkage attached to the anomeric C1'' position of ADP-ribose and acts on different substrates, such as proteins ADP-ribosylated on serine and threonine, free poly(ADP-ribose) and O-acetyl-ADP-D-ribose. Specifically acts as a serine mono-ADP-ribosylhydrolase by mediating the removal of mono-ADP-ribose attached to serine residues on proteins, thereby playing a key role in DNA damage response. Serine ADP-ribosylation of proteins constitutes the primary form of ADP-ribosylation of proteins in response to DNA damage. Does not hydrolyze ADP-ribosyl-arginine, -cysteine, -diphthamide, or -asparagine bonds. Also able to degrade protein free poly(ADP-ribose), which is synthesized in response to DNA damage: free poly(ADP-ribose) acts as a potent cell death signal and its degradation by ADPRHL2 protects cells from poly(ADP-ribose)-dependent cell death, a process named parthanatos. Also hydrolyzes free poly(ADP-ribose) in mitochondria. Specifically digests O-acetyl-ADP-D-ribose, a product of deacetylation reactions catalyzed by sirtuins. Specifically degrades 1''-O-acetyl-ADP-D-ribose isomer, rather than 2''-O-acetyl-ADP-D-ribose or 3''-O-acetyl-ADP-D-ribose isomers. In Mus musculus (Mouse), this protein is ADP-ribosylhydrolase ARH3 (Adprs).